The following is a 386-amino-acid chain: Probable dual-specificity RNA methyltransferase RlmN (386 aa).

The active-site Proton acceptor is the Glu123. In terms of domain architecture, Radical SAM core spans 129–372 (YPTRTTLCIS…ATLRDTRGQD (244 aa)). A disulfide bridge links Cys136 with Cys377. Residues Cys143, Cys147, and Cys150 each contribute to the [4Fe-4S] cluster site. S-adenosyl-L-methionine is bound by residues 198-199 (GE), Ser232, 255-257 (SLH), and Asn334. Cys377 (S-methylcysteine intermediate) is an active-site residue.

This sequence belongs to the radical SAM superfamily. RlmN family. The cofactor is [4Fe-4S] cluster.

It is found in the cytoplasm. The enzyme catalyses adenosine(2503) in 23S rRNA + 2 reduced [2Fe-2S]-[ferredoxin] + 2 S-adenosyl-L-methionine = 2-methyladenosine(2503) in 23S rRNA + 5'-deoxyadenosine + L-methionine + 2 oxidized [2Fe-2S]-[ferredoxin] + S-adenosyl-L-homocysteine. It catalyses the reaction adenosine(37) in tRNA + 2 reduced [2Fe-2S]-[ferredoxin] + 2 S-adenosyl-L-methionine = 2-methyladenosine(37) in tRNA + 5'-deoxyadenosine + L-methionine + 2 oxidized [2Fe-2S]-[ferredoxin] + S-adenosyl-L-homocysteine. Specifically methylates position 2 of adenine 2503 in 23S rRNA and position 2 of adenine 37 in tRNAs. This Bifidobacterium adolescentis (strain ATCC 15703 / DSM 20083 / NCTC 11814 / E194a) protein is Probable dual-specificity RNA methyltransferase RlmN.